A 66-amino-acid chain; its full sequence is Large ribosomal subunit protein bL35 (66 aa).

Belongs to the bacterial ribosomal protein bL35 family.

The chain is Large ribosomal subunit protein bL35 from Borreliella burgdorferi (strain ATCC 35210 / DSM 4680 / CIP 102532 / B31) (Borrelia burgdorferi).